The primary structure comprises 195 residues: MPKLGMREIRRAQLIDATLRSIDEAGLPGTTLASVAQRANISTGIVSHYFGDKDGLLEATMRHVLRDLWAATTRRRAAASDAPRARLRAVVAANFDDTQISAPVMKTWLAFWSQSMHEPTLRRLQRVNTRRLHSNLCAEFAKTLPRARAREAASGLAALIDGLWLRGALAGEPLDTKAALKLANDYIDQLLAPRV.

One can recognise an HTH tetR-type domain in the interval 8 to 68 (EIRRAQLIDA…ATMRHVLRDL (61 aa)). Residues 31–50 (TLASVAQRANISTGIVSHYF) constitute a DNA-binding region (H-T-H motif).

It functions in the pathway amine and polyamine biosynthesis; betaine biosynthesis via choline pathway [regulation]. Functionally, repressor involved in the biosynthesis of the osmoprotectant glycine betaine. It represses transcription of the choline transporter BetT and the genes of BetAB involved in the synthesis of glycine betaine. This chain is HTH-type transcriptional regulator BetI, found in Burkholderia mallei (strain NCTC 10247).